Consider the following 423-residue polypeptide: Histidine--tRNA ligase (423 aa).

Belongs to the class-II aminoacyl-tRNA synthetase family. As to quaternary structure, homodimer.

The protein resides in the cytoplasm. It carries out the reaction tRNA(His) + L-histidine + ATP = L-histidyl-tRNA(His) + AMP + diphosphate + H(+). This Rhodococcus jostii (strain RHA1) protein is Histidine--tRNA ligase.